The following is a 50-amino-acid chain: Conotoxin Bu13 (50 aa).

A signal peptide is located at residue A1. A propeptide spanning residues 2–24 (EDSRGTQLHRALRKTTKLSLSIR) is cleaved from the precursor. 3 disulfide bridges follow: C25–C40, C32–C44, and C39–C49.

It belongs to the conotoxin O1 superfamily. In terms of tissue distribution, expressed by the venom duct.

The protein resides in the secreted. The protein is Conotoxin Bu13 of Conus bullatus (Bubble cone).